Consider the following 105-residue polypeptide: DNA-binding transcriptional regulator BolA (105 aa).

This sequence belongs to the BolA/IbaG family.

Its function is as follows. Transcriptional regulator that plays an important role in general stress response. Has many effects on cell morphology, cell growth and cell division. Acts by regulating the transcription of many genes, including dacA (PBP-5), dacC (PBP-6), ampC and mreB. Probably involved in the coordination of genes that adapt the cell physiology in order to enhance cell adaptation and survival under stress conditions. Essential for normal cell morphology in stationary phase and under conditions of starvation. Also regulates a complex network of genes encoding proteins related to biofilm development, and negatively modulates flagellar biosynthesis and swimming capacity. Could be a motile/adhesive transcriptional switch, specifically involved in the transition between the planktonic and the attachment stage of biofilm formation. Overexpression produces round cell shape, impairs cell growth rate and induces biofilm development. The polypeptide is DNA-binding transcriptional regulator BolA (Escherichia coli (strain K12)).